The sequence spans 314 residues: Homoserine kinase (314 aa).

97 to 107 (PPARGMGSSAT) lines the ATP pocket.

The protein belongs to the GHMP kinase family. Homoserine kinase subfamily.

The protein resides in the cytoplasm. The enzyme catalyses L-homoserine + ATP = O-phospho-L-homoserine + ADP + H(+). The protein operates within amino-acid biosynthesis; L-threonine biosynthesis; L-threonine from L-aspartate: step 4/5. Catalyzes the ATP-dependent phosphorylation of L-homoserine to L-homoserine phosphate. The polypeptide is Homoserine kinase (Synechococcus sp. (strain RCC307)).